The sequence spans 488 residues: 3-octaprenyl-4-hydroxybenzoate carboxy-lyase (488 aa).

N172 contributes to the Mn(2+) binding site. Residues 175 to 177 (IYR), 189 to 191 (RWL), and 194 to 195 (RG) each bind prenylated FMN. E238 is a binding site for Mn(2+). Catalysis depends on D287, which acts as the Proton donor.

It belongs to the UbiD family. In terms of assembly, homohexamer. It depends on prenylated FMN as a cofactor. Mn(2+) is required as a cofactor.

It localises to the cell membrane. It catalyses the reaction a 4-hydroxy-3-(all-trans-polyprenyl)benzoate + H(+) = a 2-(all-trans-polyprenyl)phenol + CO2. The protein operates within cofactor biosynthesis; ubiquinone biosynthesis. Its function is as follows. Catalyzes the decarboxylation of 3-octaprenyl-4-hydroxy benzoate to 2-octaprenylphenol, an intermediate step in ubiquinone biosynthesis. The protein is 3-octaprenyl-4-hydroxybenzoate carboxy-lyase of Pseudomonas paraeruginosa (strain DSM 24068 / PA7) (Pseudomonas aeruginosa (strain PA7)).